The chain runs to 106 residues: UPF0145 protein Pput_2816 (106 aa).

The protein belongs to the UPF0145 family.

This is UPF0145 protein Pput_2816 from Pseudomonas putida (strain ATCC 700007 / DSM 6899 / JCM 31910 / BCRC 17059 / LMG 24140 / F1).